The chain runs to 795 residues: Antibiotic resistant DNA gyrase subunit B (795 aa).

The 116-residue stretch at 421-536 (SELYLVEGNS…RGYIYIAQPP (116 aa)) folds into the Toprim domain. The Mg(2+) site is built by Glu-427, Asp-501, and Asp-503.

Belongs to the type II topoisomerase GyrB family. Heterotetramer, composed of two GyrA and two GyrB chains. In the heterotetramer, GyrA contains the active site tyrosine that forms a transient covalent intermediate with DNA, while GyrB binds cofactors and catalyzes ATP hydrolysis. It depends on Mg(2+) as a cofactor. The cofactor is Mn(2+). Requires Ca(2+) as cofactor.

The protein resides in the cytoplasm. It carries out the reaction ATP-dependent breakage, passage and rejoining of double-stranded DNA.. Its function is as follows. A type II topoisomerase that negatively supercoils closed circular double-stranded (ds) DNA in an ATP-dependent manner to modulate DNA topology and maintain chromosomes in an underwound state. Negative supercoiling favors strand separation, and DNA replication, transcription, recombination and repair, all of which involve strand separation. Also able to catalyze the interconversion of other topological isomers of dsDNA rings, including catenanes and knotted rings. Type II topoisomerases break and join 2 DNA strands simultaneously in an ATP-dependent manner. The sequence is that of Antibiotic resistant DNA gyrase subunit B from Neisseria gonorrhoeae.